Here is a 698-residue protein sequence, read N- to C-terminus: Polyphosphate kinase (698 aa).

Position 63 (N63) interacts with ATP. Positions 390 and 420 each coordinate Mg(2+). The active-site Phosphohistidine intermediate is the H450. Residues Y483, R579, and H607 each coordinate ATP.

Belongs to the polyphosphate kinase 1 (PPK1) family. Mg(2+) is required as a cofactor. In terms of processing, an intermediate of this reaction is the autophosphorylated ppk in which a phosphate is covalently linked to a histidine residue through a N-P bond.

It carries out the reaction [phosphate](n) + ATP = [phosphate](n+1) + ADP. Its function is as follows. Catalyzes the reversible transfer of the terminal phosphate of ATP to form a long-chain polyphosphate (polyP). This is Polyphosphate kinase from Xylella fastidiosa (strain 9a5c).